We begin with the raw amino-acid sequence, 883 residues long: uncharacterized protein (883 aa).

The segment at 258–373 (INNQSDNQSN…NQFNKPDNEP (116 aa)) is disordered. 3 stretches are compositionally biased toward low complexity: residues 259 to 268 (NNQSDNQSNS), 277 to 317 (EPNG…SNSE), and 324 to 333 (NEPNTEPNTE). Residues 334–347 (SNGQSNSELNNQSD) show a composition bias toward polar residues. The segment covering 348–368 (NHPNNEPNSEPNNEPNNQFNK) has biased composition (low complexity).

This sequence belongs to the mimivirus L137 family.

This is an uncharacterized protein from Acanthamoeba polyphaga mimivirus (APMV).